We begin with the raw amino-acid sequence, 209 residues long: HTH-type transcriptional repressor BepR (209 aa).

Positions 9 to 69 (AETREAILLA…SIIGRARFPQ (61 aa)) constitute an HTH tetR-type domain. Positions 32-51 (TLTEIACYAGVTRGAIYFHF) form a DNA-binding region, H-T-H motif.

Functionally, represses expression of bepDE. In Brucella suis biovar 1 (strain 1330), this protein is HTH-type transcriptional repressor BepR (bepR).